Reading from the N-terminus, the 393-residue chain is Cysteine protease ATG4B (393 aa).

Methionine 1 is subject to N-acetylmethionine. At serine 34 the chain carries Phosphoserine. Catalysis depends on cysteine 74, which acts as the Nucleophile. An S-nitrosocysteine modification is found at cysteine 189. Catalysis depends on residues aspartate 278 and histidine 280. Residues cysteine 292 and cysteine 301 each carry the S-nitrosocysteine modification. Cysteine 292 and cysteine 361 are joined by a disulfide. Phosphoserine occurs at positions 316 and 383. Positions 388–391 match the LIR motif; the sequence is FEIL. At serine 392 the chain carries Phosphoserine.

This sequence belongs to the peptidase C54 family. As to quaternary structure, interacts with PFKP; promoting phosphorylation of ATG4B at Ser-34. Interacts with GBP7. In terms of processing, phosphorylation at Ser-383 and Ser-392 promotes autophagy by increasing protein delipidation activity without affecting proteolytic activation of ATG8 proteins. Phosphorylation at Ser-316 by ULK1 inhibits autophagy by decreasing both proteolytic activation and delipidation activities. Phosphorylation at Ser-316 is dephosphorylated by protein phosphatase 2A (PP2A). Phosphorylation at Ser-34 by AKT2 promotes its hydrolase activity, leading to increased proteolytic activation and delipidation of ATG8 family proteins. Phosphorylation at Ser-34 by AKT1 promotes mitochondrial localization and inhibition of the F1F0-ATP synthase activity, leading to elevation of mitochondrial reactive oxygen species (ROS). Ubiquitinated by RNF5, leading to its degradation by the proteasome. Post-translationally, S-nitrosylation at Cys-189 and Cys-292 in response to high glucose decreases both proteolytic activation and delipidation activities. In terms of processing, O-glycosylated by OGT, leading to increase protease activity, thereby promoting the proteolytic activation of ATG8 family proteins. Forms reversible intrachain disulfide bonds in response to oxidative stress. Forms interchain disulfide bonds, leading to formation of homooligomers in response to oxidation.

The protein resides in the cytoplasm. It is found in the cytosol. It localises to the cytoplasmic vesicle. Its subcellular location is the autophagosome. The protein localises to the endoplasmic reticulum. The protein resides in the mitochondrion. The catalysed reaction is [protein]-C-terminal L-amino acid-glycyl-phosphatidylethanolamide + H2O = [protein]-C-terminal L-amino acid-glycine + a 1,2-diacyl-sn-glycero-3-phosphoethanolamine. It carries out the reaction [protein]-C-terminal L-amino acid-glycyl-phosphatidylserine + H2O = [protein]-C-terminal L-amino acid-glycine + a 1,2-diacyl-sn-glycero-3-phospho-L-serine. Inhibited by N-ethylmaleimide. Redox-regulated during autophagy since reducing conditions activate ATG4A whereas an oxidizing environment such as the presence of H(2)O(2) inhibits its activity. The cysteine protease activity compounds is inhibited by styrylquinoline compounds 4-28 and LV-320. Its function is as follows. Cysteine protease that plays a key role in autophagy by mediating both proteolytic activation and delipidation of ATG8 family proteins. Required for canonical autophagy (macroautophagy), non-canonical autophagy as well as for mitophagy. The protease activity is required for proteolytic activation of ATG8 family proteins: cleaves the C-terminal amino acid of ATG8 proteins MAP1LC3A, MAP1LC3B, MAP1LC3C, GABARAPL1, GABARAPL2 and GABARAP, to reveal a C-terminal glycine. Exposure of the glycine at the C-terminus is essential for ATG8 proteins conjugation to phosphatidylethanolamine (PE) and insertion to membranes, which is necessary for autophagy. Protease activity is also required to counteract formation of high-molecular weight conjugates of ATG8 proteins (ATG8ylation): acts as a deubiquitinating-like enzyme that removes ATG8 conjugated to other proteins, such as ATG3. In addition to the protease activity, also mediates delipidation of ATG8 family proteins. Catalyzes delipidation of PE-conjugated forms of ATG8 proteins during macroautophagy. Also involved in non-canonical autophagy, a parallel pathway involving conjugation of ATG8 proteins to single membranes at endolysosomal compartments, by catalyzing delipidation of ATG8 proteins conjugated to phosphatidylserine (PS). Compared to other members of the family (ATG4A, ATG4C or ATG4C), constitutes the major protein for proteolytic activation of ATG8 proteins, while it displays weaker delipidation activity than other ATG4 paralogs. Involved in phagophore growth during mitophagy independently of its protease activity and of ATG8 proteins: acts by regulating ATG9A trafficking to mitochondria and promoting phagophore-endoplasmic reticulum contacts during the lipid transfer phase of mitophagy. The chain is Cysteine protease ATG4B from Mus musculus (Mouse).